Reading from the N-terminus, the 395-residue chain is S-adenosylmethionine synthase (395 aa).

H19 contacts ATP. D21 contacts Mg(2+). A K(+)-binding site is contributed by E47. The L-methionine site is built by E60 and Q103. A flexible loop region spans residues 103 to 113; that stretch reads QSPDIAQGVNS. Residues 170-172, 236-237, D245, 251-252, A268, and K272 each bind ATP; these read DNK, KF, and RK. D245 is an L-methionine binding site. Position 276 (K276) interacts with L-methionine.

It belongs to the AdoMet synthase family. In terms of assembly, homotetramer; dimer of dimers. It depends on Mg(2+) as a cofactor. Requires K(+) as cofactor.

It localises to the cytoplasm. It catalyses the reaction L-methionine + ATP + H2O = S-adenosyl-L-methionine + phosphate + diphosphate. It functions in the pathway amino-acid biosynthesis; S-adenosyl-L-methionine biosynthesis; S-adenosyl-L-methionine from L-methionine: step 1/1. Functionally, catalyzes the formation of S-adenosylmethionine (AdoMet) from methionine and ATP. The overall synthetic reaction is composed of two sequential steps, AdoMet formation and the subsequent tripolyphosphate hydrolysis which occurs prior to release of AdoMet from the enzyme. The sequence is that of S-adenosylmethionine synthase from Rhodopirellula baltica (strain DSM 10527 / NCIMB 13988 / SH1).